Reading from the N-terminus, the 853-residue chain is DNA mismatch repair protein MutS (853 aa).

614 to 621 (GPNMGGKS) is an ATP binding site.

Belongs to the DNA mismatch repair MutS family.

This protein is involved in the repair of mismatches in DNA. It is possible that it carries out the mismatch recognition step. This protein has a weak ATPase activity. The polypeptide is DNA mismatch repair protein MutS (Escherichia coli (strain SMS-3-5 / SECEC)).